A 374-amino-acid polypeptide reads, in one-letter code: Probable aminopeptidase YDR415C (374 aa).

Positions 1–18 are cleaved as a signal peptide; sequence MRIQSLFVLFNVAIIAWS. Residues His177, Asp196, Glu235, Asp262, and His340 each coordinate Zn(2+).

It belongs to the peptidase M28 family. M28E subfamily. Zn(2+) is required as a cofactor.

The polypeptide is Probable aminopeptidase YDR415C (Saccharomyces cerevisiae (strain ATCC 204508 / S288c) (Baker's yeast)).